A 414-amino-acid polypeptide reads, in one-letter code: MSNNLIIINAHIVTPQGRTARKGEAMNELLNIPCGTVRVTDGIITYVGENRISHEKPGYKVLDARGNVLLPGFVDSHTHLVFGGFRPDEFIWRLNGDSYMSIMERGGGIINTVRATREASFEELKHKAEWFLDTMSRMGVTTVEGKSGYGLDRDTELKQLSIMQAINECPDRKVDIATTFLGAHALPEEYKGRSDAYIDFLINEMLPMIHQKQLAENCDIFCEKGVFTVEQSRKLLKAAQALGFGTKLHADEIVSFGGAELAGELKALSADHLLQASDEGIKALAQNNVVATLLPLTAFTLKEPYARGRKMIDSGCAVALATDLNPGSCFSGSIPLTFALACIYMKLTVAEAITAITLNGAAALGRADRIGSIEAGKQGDFVLLGTDNPHILPYYTGMNAVKLTIKGGRILHSN.

Fe(3+)-binding residues include H77 and H79. 2 residues coordinate Zn(2+): H77 and H79. Positions 86, 149, and 184 each coordinate 4-imidazolone-5-propanoate. Y149 serves as a coordination point for N-formimidoyl-L-glutamate. A Fe(3+)-binding site is contributed by H249. H249 is a Zn(2+) binding site. E252 serves as a coordination point for 4-imidazolone-5-propanoate. D323 contributes to the Fe(3+) binding site. Position 323 (D323) interacts with Zn(2+). Residues N325 and G327 each contribute to the N-formimidoyl-L-glutamate site. Position 328 (S328) interacts with 4-imidazolone-5-propanoate.

The protein belongs to the metallo-dependent hydrolases superfamily. HutI family. Zn(2+) serves as cofactor. It depends on Fe(3+) as a cofactor.

It localises to the cytoplasm. It catalyses the reaction 4-imidazolone-5-propanoate + H2O = N-formimidoyl-L-glutamate. Its pathway is amino-acid degradation; L-histidine degradation into L-glutamate; N-formimidoyl-L-glutamate from L-histidine: step 3/3. Catalyzes the hydrolytic cleavage of the carbon-nitrogen bond in imidazolone-5-propanoate to yield N-formimidoyl-L-glutamate. It is the third step in the universal histidine degradation pathway. The protein is Imidazolonepropionase of Phocaeicola vulgatus (strain ATCC 8482 / DSM 1447 / JCM 5826 / CCUG 4940 / NBRC 14291 / NCTC 11154) (Bacteroides vulgatus).